We begin with the raw amino-acid sequence, 546 residues long: Probable protein kinase UbiB (546 aa).

Positions 123–501 (DFDETPLASA…SRRQGQARYL (379 aa)) constitute a Protein kinase domain. ATP contacts are provided by residues 129-137 (LASASIAQV) and K152. The active-site Proton acceptor is the D287. Transmembrane regions (helical) follow at residues 498–517 (ARYLLGVGASLLLAGVFLLT) and 522–541 (IEWGQISLAGAGLCWLLGWL).

This sequence belongs to the ABC1 family. UbiB subfamily.

It is found in the cell inner membrane. It functions in the pathway cofactor biosynthesis; ubiquinone biosynthesis [regulation]. Its function is as follows. Is probably a protein kinase regulator of UbiI activity which is involved in aerobic coenzyme Q (ubiquinone) biosynthesis. The chain is Probable protein kinase UbiB from Aeromonas hydrophila subsp. hydrophila (strain ATCC 7966 / DSM 30187 / BCRC 13018 / CCUG 14551 / JCM 1027 / KCTC 2358 / NCIMB 9240 / NCTC 8049).